Reading from the N-terminus, the 93-residue chain is UPF0223 protein str0998 (93 aa).

This sequence belongs to the UPF0223 family.

This Streptococcus thermophilus (strain CNRZ 1066) protein is UPF0223 protein str0998.